Here is a 182-residue protein sequence, read N- to C-terminus: Lipoprotein signal peptidase (182 aa).

3 helical membrane passes run valine 12–tryptophan 32, alanine 68–valine 88, and valine 91–isoleucine 111. Catalysis depends on residues aspartate 127 and aspartate 140. A helical membrane pass occupies residues valine 135–leucine 155.

Belongs to the peptidase A8 family.

It is found in the cell membrane. It catalyses the reaction Release of signal peptides from bacterial membrane prolipoproteins. Hydrolyzes -Xaa-Yaa-Zaa-|-(S,diacylglyceryl)Cys-, in which Xaa is hydrophobic (preferably Leu), and Yaa (Ala or Ser) and Zaa (Gly or Ala) have small, neutral side chains.. It functions in the pathway protein modification; lipoprotein biosynthesis (signal peptide cleavage). Its function is as follows. This protein specifically catalyzes the removal of signal peptides from prolipoproteins. This is Lipoprotein signal peptidase from Bifidobacterium longum (strain DJO10A).